Reading from the N-terminus, the 492-residue chain is Stomatal closure-related actin-binding protein 2 (492 aa).

Residues 112–132 (LKKLRDALETMRGRMDGRNRE) adopt a coiled-coil conformation.

This sequence belongs to the SCAB family. In terms of tissue distribution, expressed in roots, stems, leaves, siliques and flowers.

It localises to the cytoplasm. Its subcellular location is the cytoskeleton. In terms of biological role, probable plant-specific actin binding protein that bundles and stabilizes microfilaments (MFs). This is Stomatal closure-related actin-binding protein 2 from Arabidopsis thaliana (Mouse-ear cress).